The primary structure comprises 190 residues: Dynactin subunit 6 (190 aa).

The residue at position 186 (Thr-186) is a Phosphothreonine; by CDK1.

It belongs to the dynactin subunits 5/6 family. Dynactin subunit 6 subfamily. Subunit of dynactin, a multiprotein complex part of a tripartite complex with dynein and a adapter, such as BICDL1, BICD2 or HOOK3. The dynactin complex is built around ACTR1A/ACTB filament and consists of an actin-related filament composed of a shoulder domain, a pointed end and a barbed end. Its length is defined by its flexible shoulder domain. The soulder is composed of 2 DCTN1 subunits, 4 DCTN2 and 2 DCTN3. The 4 DCNT2 (via N-terminus) bind the ACTR1A filament and act as molecular rulers to determine the length. The pointed end is important for binding dynein-dynactin cargo adapters. Consists of 4 subunits: ACTR10, DCNT4, DCTN5 and DCTN6. Within the complex DCTN6 forms a heterodimer with DCTN5. The barbed end is composed of a CAPZA1:CAPZB heterodimers, which binds ACTR1A/ACTB filament and dynactin and stabilizes dynactin. Interacts with PLK1. Interacts with N4BP2L1. In terms of processing, phosphorylation at Thr-186 by CDK1 during mitotic prometaphase creates a binding site for PLK1 that facilitates its recruitment to kinetochores. Ubiquitous.

Its subcellular location is the cytoplasm. It is found in the cytoskeleton. The protein localises to the chromosome. The protein resides in the centromere. It localises to the kinetochore. Its function is as follows. Part of the dynactin complex that activates the molecular motor dynein for ultra-processive transport along microtubules. In Homo sapiens (Human), this protein is Dynactin subunit 6.